A 715-amino-acid chain; its full sequence is Fatty acid oxidation complex subunit alpha (715 aa).

The interval 1-190 (MTTTSAFMLN…KAGLVDDVVP (190 aa)) is enoyl-CoA hydratase. The tract at residues 306-715 (GPLNSVGILG…WTNGETDQGN (410 aa)) is 3-hydroxyacyl-CoA dehydrogenase.

In the N-terminal section; belongs to the enoyl-CoA hydratase/isomerase family. This sequence in the central section; belongs to the 3-hydroxyacyl-CoA dehydrogenase family. Heterotetramer of two alpha chains (FadJ) and two beta chains (FadI).

It is found in the cytoplasm. It catalyses the reaction a (3S)-3-hydroxyacyl-CoA = a (2E)-enoyl-CoA + H2O. The catalysed reaction is a 4-saturated-(3S)-3-hydroxyacyl-CoA = a (3E)-enoyl-CoA + H2O. The enzyme catalyses a (3S)-3-hydroxyacyl-CoA + NAD(+) = a 3-oxoacyl-CoA + NADH + H(+). It carries out the reaction (3S)-3-hydroxybutanoyl-CoA = (3R)-3-hydroxybutanoyl-CoA. It participates in lipid metabolism; fatty acid beta-oxidation. Catalyzes the formation of a hydroxyacyl-CoA by addition of water on enoyl-CoA. Also exhibits 3-hydroxyacyl-CoA epimerase and 3-hydroxyacyl-CoA dehydrogenase activities. The protein is Fatty acid oxidation complex subunit alpha of Salmonella agona (strain SL483).